Reading from the N-terminus, the 895-residue chain is Probable LRR receptor-like serine/threonine-protein kinase At5g48740 (895 aa).

The N-terminal stretch at 1–16 (MLFWVLLSSFCVFCFS) is a signal peptide. The Extracellular segment spans residues 17-544 (SPDGFLSLSC…INKKQRKQNR (528 aa)). 7 N-linked (GlcNAc...) asparagine glycosylation sites follow: Asn36, Asn50, Asn60, Asn140, Asn195, Asn234, and Asn318. LRR repeat units lie at residues 385–407 (RVTSLFLSKINLRSISPTFGDLL), 408–430 (DLKTLDLHNTSLTGAIQNVGSLK), 431–453 (DLQKLNLSFNQLESFGSELEDLV), 454–477 (NLEVLDLQNNSLQGSVPETLGKLK), 478–500 (KLRLLNLENNNLVGPLPQSLNIT), and 511–532 (CLSFSSISCNNVSSTIDTPQVT). 5 N-linked (GlcNAc...) asparagine glycosylation sites follow: Asn416, Asn436, Asn462, Asn498, and Asn521. The chain crosses the membrane as a helical span at residues 545-565 (IAILLGVSGGALFATFLVFVF). Residues 566–895 (MSIFTRRQRN…SYLAASAHTD (330 aa)) are Cytoplasmic-facing. Residues 606–888 (RNFKEVIGRG…EAYSLQLSYL (283 aa)) enclose the Protein kinase domain. Residues 612-620 (IGRGSFGAV) and Lys634 contribute to the ATP site. Phosphotyrosine is present on Tyr679. The active-site Proton acceptor is the Asp732. A Phosphoserine modification is found at Ser736. Phosphothreonine occurs at positions 767 and 772. Tyr780 carries the phosphotyrosine modification.

This sequence belongs to the protein kinase superfamily. Ser/Thr protein kinase family.

It localises to the membrane. It carries out the reaction L-seryl-[protein] + ATP = O-phospho-L-seryl-[protein] + ADP + H(+). It catalyses the reaction L-threonyl-[protein] + ATP = O-phospho-L-threonyl-[protein] + ADP + H(+). In Arabidopsis thaliana (Mouse-ear cress), this protein is Probable LRR receptor-like serine/threonine-protein kinase At5g48740.